Here is a 473-residue protein sequence, read N- to C-terminus: Glutamate--tRNA ligase (473 aa).

The short motif at 11 to 21 is the 'HIGH' region element; that stretch reads PSPTGFLHIGG. A 'KMSKS' region motif is present at residues 240–244; the sequence is KLSKR. K243 provides a ligand contact to ATP.

This sequence belongs to the class-I aminoacyl-tRNA synthetase family. Glutamate--tRNA ligase type 1 subfamily. Monomer.

It is found in the cytoplasm. The enzyme catalyses tRNA(Glu) + L-glutamate + ATP = L-glutamyl-tRNA(Glu) + AMP + diphosphate. In terms of biological role, catalyzes the attachment of glutamate to tRNA(Glu) in a two-step reaction: glutamate is first activated by ATP to form Glu-AMP and then transferred to the acceptor end of tRNA(Glu). This chain is Glutamate--tRNA ligase, found in Afipia carboxidovorans (strain ATCC 49405 / DSM 1227 / KCTC 32145 / OM5) (Oligotropha carboxidovorans).